Consider the following 150-residue polypeptide: D-aminoacyl-tRNA deacylase (150 aa).

The Gly-cisPro motif, important for rejection of L-amino acids signature appears at 138 to 139 (GP).

This sequence belongs to the DTD family. As to quaternary structure, homodimer.

It localises to the cytoplasm. The catalysed reaction is glycyl-tRNA(Ala) + H2O = tRNA(Ala) + glycine + H(+). It catalyses the reaction a D-aminoacyl-tRNA + H2O = a tRNA + a D-alpha-amino acid + H(+). An aminoacyl-tRNA editing enzyme that deacylates mischarged D-aminoacyl-tRNAs. Also deacylates mischarged glycyl-tRNA(Ala), protecting cells against glycine mischarging by AlaRS. Acts via tRNA-based rather than protein-based catalysis; rejects L-amino acids rather than detecting D-amino acids in the active site. By recycling D-aminoacyl-tRNA to D-amino acids and free tRNA molecules, this enzyme counteracts the toxicity associated with the formation of D-aminoacyl-tRNA entities in vivo and helps enforce protein L-homochirality. The protein is D-aminoacyl-tRNA deacylase of Azobacteroides pseudotrichonymphae genomovar. CFP2.